The chain runs to 711 residues: MLNPIVRKFQYGQHTVTLETGMMARQATAAVMVSMDDTAVFVTVVGQKKAKPGQDFFPLTVNYQERTYAAGRIPGSFFRREGRPSEGETLIARLIDRPIRPLFPEGFVNEVQVIATVVSVNPQVNPDIVAMIGASAALSLSGIPFNGPNGAARVGYINDQYVLNPTQDELKESKLDLVVAGTEAAVLMVESEAELLSEDQMLGAVVFGHEQQQVVIQNINELVKEAGKPRWDWQPEPVNEALNARVAALAEARLSDAYRITDKQERYAQVDVIKSETIATLLAEDETLDENELGEILHAIEKNVVRSRVLAGEPRIDGREKDMIRGLDVRTGVLPRTHGSALFTRGETQALVTATLGTARDAQVLDELMGERTDTFLFHYNFPPYSVGETGMVGSPKRREIGHGRLAKRGVLAVMPDMDKFPYTVRVVSEITESNGSSSMASVCGASLALMDAGVPIKAAVAGIAMGLVKEGDNYVVLSDILGDEDHLGDMDFKVAGSRDGISALQMDIKIEGITKEIMQVALNQAKGARLHILGVMEQAINAPRGDISEFAPRIHTIKINPDKIKDVIGKGGSVIRALTEETGTTIEIEDDGTVKIAATDGEKAKHAIRRIEEITAEIEVGRVYNGKVTRIVDFGAFVAIGGGKEGLVHISQIADKRVEKVTDYLQMGQEVPVKVLEVDRQGRIRLSIKEATEQSQPAAALEAPAAEQGE.

Positions 486 and 492 each coordinate Mg(2+). A KH domain is found at 553–612; that stretch reads PRIHTIKINPDKIKDVIGKGGSVIRALTEETGTTIEIEDDGTVKIAATDGEKAKHAIRRI. One can recognise an S1 motif domain in the interval 622 to 690; it reads GRVYNGKVTR…RQGRIRLSIK (69 aa). A disordered region spans residues 690 to 711; the sequence is KEATEQSQPAAALEAPAAEQGE. Over residues 698 to 711 the composition is skewed to low complexity; sequence PAAALEAPAAEQGE.

Belongs to the polyribonucleotide nucleotidyltransferase family. In terms of assembly, component of the RNA degradosome, which is a multiprotein complex involved in RNA processing and mRNA degradation. Mg(2+) is required as a cofactor.

The protein resides in the cytoplasm. It carries out the reaction RNA(n+1) + phosphate = RNA(n) + a ribonucleoside 5'-diphosphate. Involved in mRNA degradation. Catalyzes the phosphorolysis of single-stranded polyribonucleotides processively in the 3'- to 5'-direction. In Escherichia coli O127:H6 (strain E2348/69 / EPEC), this protein is Polyribonucleotide nucleotidyltransferase.